The sequence spans 340 residues: MVTLRKRTLKVLTFLVLFIFLTSFFLNYSHTMVATTWFPKQMVLELSENLKRLIKHRPCTCTHCIGQRKLSAWFDERFNQTMQPLLTAQNALLEDDTYRWWLRLQREKKPNNLNDTIKELFRVVPGNVDPMLEKRSVGCRRCAVVGNSGNLRESSYGPEIDSHDFVLRMNKAPTAGFEADVGTKTTHHLVYPESFRELGDNVSMILVPFKTIDLEWVVSAITTGTISHTYIPVPAKIRVKQDKILIYHPAFIKYVFDNWLQGHGRYPSTGILSVIFSMHVCDEVDLYGFGADSKGNWHHYWENNPSAGAFRKTGVHDADFESNVTATLASINKIRIFKGR.

The Cytoplasmic segment spans residues 1–13; the sequence is MVTLRKRTLKVLT. A helical; Signal-anchor for type II membrane protein membrane pass occupies residues 14–34; sequence FLVLFIFLTSFFLNYSHTMVA. At 35-340 the chain is on the lumenal side; that stretch reads TTWFPKQMVL…INKIRIFKGR (306 aa). Intrachain disulfides connect C59–C64, C61–C139, and C142–C281. N79 carries an N-linked (GlcNAc...) asparagine glycan. Position 105 (Q105) interacts with substrate. Residue N114 is glycosylated (N-linked (GlcNAc...) asparagine). Positions 147 and 170 each coordinate substrate. N-linked (GlcNAc...) asparagine glycosylation occurs at N201. 6 residues coordinate substrate: Y230, Y266, G270, G290, H299, and H316. N-linked (GlcNAc...) asparagine glycosylation is present at N323.

Belongs to the glycosyltransferase 29 family. In terms of processing, the soluble form derives from the membrane form by proteolytic processing. In terms of tissue distribution, expressed in several tissues. Highest expression in lung, liver, skeletal muscle, kidney, pancreas, spleen and placenta.

It localises to the golgi apparatus. It is found in the golgi stack membrane. Its subcellular location is the trans-Golgi network membrane. The protein localises to the secreted. The catalysed reaction is a beta-D-galactosyl-(1-&gt;3)-N-acetyl-alpha-D-galactosaminyl derivative + CMP-N-acetyl-beta-neuraminate = an N-acetyl-alpha-neuraminyl-(2-&gt;3)-beta-D-galactosyl-(1-&gt;3)-N-acetyl-alpha-D-galactosaminyl derivative + CMP + H(+). The enzyme catalyses a ganglioside GM1 + CMP-N-acetyl-beta-neuraminate = a ganglioside GD1a + CMP + H(+). It catalyses the reaction a ganglioside GM1 (d18:1(4E)) + CMP-N-acetyl-beta-neuraminate = a ganglioside GD1a (d18:1(4E)) + CMP + H(+). It carries out the reaction ganglioside GM1 (d18:1(4E)/18:0) + CMP-N-acetyl-beta-neuraminate = ganglioside GD1a (18:1(4E)/18:0) + CMP + H(+). The catalysed reaction is a ganglioside GA1 + CMP-N-acetyl-beta-neuraminate = a ganglioside GM1b + CMP + H(+). The enzyme catalyses a ganglioside GA1 (d18:1(4E)) + CMP-N-acetyl-beta-neuraminate = a ganglioside GM1b (d18:1(4E)) + CMP + H(+). It catalyses the reaction a ganglioside GD1b + CMP-N-acetyl-beta-neuraminate = a ganglioside GT1b + CMP + H(+). It carries out the reaction a 3-O-[beta-D-galactosyl-(1-&gt;3)-N-acetyl-alpha-D-galactosaminyl]-L-threonyl-[protein] + CMP-N-acetyl-beta-neuraminate = a 3-O-[N-acetyl-alpha-neuraminyl-(2-&gt;3)-beta-D-galactosyl-(1-&gt;3)-N-acetyl-alpha-D-galactosaminyl]-L-threonyl-[protein] + CMP + H(+). The catalysed reaction is a 3-O-[beta-D-galactosyl-(1-&gt;3)-N-acetyl-alpha-D-galactosaminyl]-L-seryl-[protein] + CMP-N-acetyl-beta-neuraminate = 3-O-[N-acetyl-alpha-neuraminyl-(2-&gt;3)-beta-D-galactosyl-(1-&gt;3)-N-acetyl-alpha-D-galactosaminyl]-L-seryl-[protein] + CMP + H(+). The protein operates within protein modification; protein glycosylation. It participates in glycolipid biosynthesis. Functionally, a beta-galactoside alpha2-&gt;3 sialyltransferase involved in terminal sialylation of glycoproteins and glycolipids. Catalyzes the transfer of sialic acid (N-acetyl-neuraminic acid; Neu5Ac) from the nucleotide sugar donor CMP-Neu5Ac onto acceptor Galbeta-(1-&gt;3)-GalNAc-terminated glycoconjugates through an alpha2-3 linkage. Adds sialic acid to the core 1 O-glycan, Galbeta-(1-&gt;3)-GalNAc-O-Ser/Thr, which is a major structure of mucin-type O-glycans. As part of a homeostatic mechanism that regulates CD8-positive T cell numbers, sialylates core 1 O-glycans of T cell glycoproteins, SPN/CD43 and PTPRC/CD45. Prevents premature apoptosis of thymic CD8-positive T cells prior to peripheral emigration, whereas in the secondary lymphoid organs controls the survival of CD8-positive memory T cells generated following a successful immune response. Transfers sialic acid to asialofetuin, presumably onto Galbeta-(1-&gt;3)-GalNAc-O-Ser. Sialylates GM1a, GA1 and GD1b gangliosides to form GD1a, GM1b and GT1b, respectively. The polypeptide is CMP-N-acetylneuraminate-beta-galactosamide-alpha-2,3-sialyltransferase 1 (Homo sapiens (Human)).